Consider the following 600-residue polypeptide: Copine-A (600 aa).

C2 domains follow at residues 1-111 (MNLK…TVCL) and 116-246 (KSGK…NVIN). Residues aspartate 23, aspartate 29, aspartate 82, aspartate 84, aspartate 89, aspartate 151, aspartate 158, aspartate 215, aspartate 217, and aspartate 223 each contribute to the Ca(2+) site. In terms of domain architecture, VWFA spans 286–503 (NLIVGIDCTA…ELAAEVLREI (218 aa)). Residues 535–549 (YDNPTTTTTATSPST) are compositionally biased toward low complexity. The interval 535 to 583 (YDNPTTTTTATSPSTGIDLNKGSNVGLNLTKTESSPSPSGGAGIDLNKG) is disordered. The segment covering 555-572 (KGSNVGLNLTKTESSPSP) has biased composition (polar residues).

This sequence belongs to the copine family. Ca(2+) is required as a cofactor.

It localises to the cytoplasm. The protein resides in the membrane. In terms of biological role, required for cytokinesis, contractile vacuole function and development. This is Copine-A (cpnA) from Dictyostelium discoideum (Social amoeba).